The chain runs to 164 residues: Anthrone oxygenase AgnL2 (164 aa).

3 consecutive transmembrane segments (helical) span residues Val11–Val31, Arg48–Tyr70, and Val85–Val105.

This sequence belongs to the anthrone oxygenase family.

It localises to the membrane. It carries out the reaction emodin anthrone + O2 = emodin + H2O + H(+). It participates in secondary metabolite biosynthesis. Its function is as follows. Anthrone oxygenase; part of the gene cluster that mediates the biosynthesis of agnestins, dihydroxy-xanthone metabolites. The pathway begins with the assembly and cyclization of atrochrysone thioester by the non-reducing polyketide synthase Agnpks1. The atrochrysone carboxyl ACP thioesterase AgnL7 then breaks the thioester bond and releases the atrochrysone carboxylic acid as the first enzyme-free intermediate. The decarboxylase AgnL1 then catalyzes the concerted decarboxylation-elimination required to convert atochrysone carboxylic acid into emodin anthrone, which is further oxidized to emodin by the anthrone oxygenase AgnL2. Emodin then undergoes reduction catalyzed by the oxidoreductase AgnL4 to yield the dihydroquinone tautomer which is the substrate for reduction by the short chain dehydrogenase AgnL6 reduction to produce hydroxyketone, followed by AgnL8 dehydration and likely spontaneous autoxidation to chrysophanol. Baeyer-Villiger oxidation by the oxidase AgnL3 leads to monodictyphenone via cleavage of the C-10/C-10a bond of chrysophanol. Alternative cleavage at the C-4a/C-10 bond of chrysophanol also leads to the formation some cephalone F. Further conversion to agnestins A and B, requires reduction to dihydro-monodictyphenone, oxidation to agnestin C probably via an epoxide, and rearrangement to either agnestin A or agnestin B directly, although agnestin A or agnestin B can also interconvert. Within the cluster, AgnR1 is the only unassigned oxidoreductase present which could be involved in this conversion. However, AgnR1 seems not to be involved in this step, and thus genes involved in the proposed oxidation/reduction may be located elsewhere on the genome. Further agnestin A derivatives are probably formed by spontaneous decarboxylations, dehydrations and methanolysis reactions. This Paecilomyces divaricatus (Penicillium divaricatum) protein is Anthrone oxygenase AgnL2.